A 472-amino-acid chain; its full sequence is L-fuculokinase (472 aa).

Belongs to the FGGY kinase family. It depends on a divalent metal cation as a cofactor.

The catalysed reaction is L-fuculose + ATP = L-fuculose 1-phosphate + ADP + H(+). The protein operates within carbohydrate degradation; L-fucose degradation; L-lactaldehyde and glycerone phosphate from L-fucose: step 2/3. In terms of biological role, catalyzes the phosphorylation of L-fuculose. Can also phosphorylate, with lower efficiency, D-ribulose, D-xylulose and D-fructose. In Escherichia coli (strain K12), this protein is L-fuculokinase.